The sequence spans 123 residues: Large ribosomal subunit protein uL14 (123 aa).

Belongs to the universal ribosomal protein uL14 family. As to quaternary structure, part of the 50S ribosomal subunit. Forms a cluster with proteins L3 and L19. In the 70S ribosome, L14 and L19 interact and together make contacts with the 16S rRNA in bridges B5 and B8.

Its function is as follows. Binds to 23S rRNA. Forms part of two intersubunit bridges in the 70S ribosome. The polypeptide is Large ribosomal subunit protein uL14 (Yersinia pestis bv. Antiqua (strain Antiqua)).